A 524-amino-acid chain; its full sequence is M-phase inducer phosphatase 1 (524 aa).

Positions 74–84 (MGSSESTDSGF) match the Phosphodegron motif. Phosphoserine; by CHEK1 is present on S76. Residues S79, S82, and S88 each carry the phosphoserine; by NEK11 modification. S107 bears the Phosphoserine mark. A Phosphoserine; by CHEK1 and CHEK2 modification is found at S124. The KEN box motif lies at 141–143 (KEN). At S178 the chain carries Phosphoserine; by CHEK1. Positions 264-317 (LCSSSTRSVLKRPERSQEESPPGSTKRRKSMSGASPKESTNPEKAHETLHQSLS) are disordered. Phosphoserine; by CHEK1 and CHEK2 is present on residues S279 and S293. The span at 303–312 (TNPEKAHETL) shows a compositional bias: basic and acidic residues. S321 carries the phosphoserine modification. The Rhodanese domain occupies 376–482 (LIKEFVIIDC…FFMKCQSYCE (107 aa)). The active site involves C431. Residue T507 is modified to Phosphothreonine; by CHEK1. Residues S513 and S519 each carry the phosphoserine; by PLK3 modification.

The protein belongs to the MPI phosphatase family. In terms of assembly, interacts with CCNB1/cyclin B1. Interacts with YWHAE/14-3-3 epsilon when phosphorylated. Interacts with CUL1 specifically when CUL1 is neddylated and active. Interacts with BTRC/BTRCP1 and FBXW11/BTRCP2. Interactions with CUL1, BTRC and FBXW11 are enhanced upon DNA damage. Interacts with CHEK2; mediates CDC25A phosphorylation and degradation in response to infrared-induced DNA damages. Interacts with HSP90AB1; prevents heat shock-mediated CDC25A degradation and contributes to cell cycle progression. Post-translationally, phosphorylated by CHEK1 on Ser-76, Ser-124, Ser-178, Ser-279, Ser-293 and Thr-507 during checkpoint mediated cell cycle arrest. Also phosphorylated by CHEK2 on Ser-124, Ser-279, and Ser-293 during checkpoint mediated cell cycle arrest. Phosphorylation on Ser-178 and Thr-507 creates binding sites for YWHAE/14-3-3 epsilon which inhibits CDC25A. Phosphorylation on Ser-76, Ser-124, Ser-178, Ser-279 and Ser-293 may also promote ubiquitin-dependent proteolysis of CDC25A by the SCF complex. Phosphorylation of CDC25A at Ser-76 by CHEK1 primes it for subsequent phosphorylation at Ser-79, Ser-82 and Ser-88 by NEK11. Phosphorylation by NEK11 is required for BTRC-mediated polyubiquitination and degradation. Phosphorylation by PIM1 leads to an increase in phosphatase activity. Phosphorylated by PLK3 following DNA damage, leading to promote its ubiquitination and degradation. In terms of processing, ubiquitinated by the anaphase promoting complex/cyclosome (APC/C) ubiquitin ligase complex that contains FZR1/CDH1 during G1 phase leading to its degradation by the proteasome. Ubiquitinated by a SCF complex containing BTRC and FBXW11 during S phase leading to its degradation by the proteasome. Deubiquitination by USP17L2/DUB3 leads to its stabilization.

The enzyme catalyses O-phospho-L-tyrosyl-[protein] + H2O = L-tyrosyl-[protein] + phosphate. With respect to regulation, stimulated by B-type cyclins. Stimulated by PIM1-mediated phosphorylation. Functionally, tyrosine protein phosphatase which functions as a dosage-dependent inducer of mitotic progression. Directly dephosphorylates CDK1 and stimulates its kinase activity. Also dephosphorylates CDK2 in complex with cyclin-E, in vitro. The protein is M-phase inducer phosphatase 1 (CDC25A) of Homo sapiens (Human).